A 369-amino-acid chain; its full sequence is Protein-glutamate methylesterase/protein-glutamine glutaminase of group 3 operon (369 aa).

Residues 11-128 (RVLIVDDSAA…DLERQEASIR (118 aa)) form the Response regulatory domain. Asp-62 is subject to 4-aspartylphosphate. Positions 136–168 (ATETTRRRSQPEPRPLAPGPKLTADEILPARPP) are disordered. The CheB-type methylesterase domain occupies 170–358 (PVPETMPVVC…LDRLAARIME (189 aa)). Active-site residues include Ser-183, His-209, and Asp-305.

It belongs to the CheB family. In terms of processing, phosphorylated in vitro by CheA2, but not by CheA1. Phosphorylation of the N-terminal regulatory domain activates the methylesterase activity.

The protein resides in the cytoplasm. The catalysed reaction is [protein]-L-glutamate 5-O-methyl ester + H2O = L-glutamyl-[protein] + methanol + H(+). It catalyses the reaction L-glutaminyl-[protein] + H2O = L-glutamyl-[protein] + NH4(+). Involved in chemotaxis. Part of a chemotaxis signal transduction system that modulates chemotaxis in response to various stimuli. Catalyzes the demethylation of specific methylglutamate residues introduced into the chemoreceptors (methyl-accepting chemotaxis proteins or MCP) by CheR. Also mediates the irreversible deamidation of specific glutamine residues to glutamic acid. In Cereibacter sphaeroides (Rhodobacter sphaeroides), this protein is Protein-glutamate methylesterase/protein-glutamine glutaminase of group 3 operon (cheB3).